The sequence spans 332 residues: Phosphoenolpyruvate transferase (332 aa).

Position 63 (Asp-63) interacts with 7,8-didemethyl-8-hydroxy-5-deazariboflavin.

Belongs to the CofD family. Homodimer. Mg(2+) is required as a cofactor.

The catalysed reaction is enolpyruvoyl-2-diphospho-5'-guanosine + 7,8-didemethyl-8-hydroxy-5-deazariboflavin = dehydro coenzyme F420-0 + GMP + H(+). It participates in cofactor biosynthesis; coenzyme F420 biosynthesis. Catalyzes the transfer of the phosphoenolpyruvate moiety from enoylpyruvoyl-2-diphospho-5'-guanosine (EPPG) to 7,8-didemethyl-8-hydroxy-5-deazariboflavin (FO) with the formation of dehydro coenzyme F420-0 and GMP. This chain is Phosphoenolpyruvate transferase, found in Nocardia farcinica (strain IFM 10152).